The following is a 470-amino-acid chain: 1-aminocyclopropane-1-carboxylate synthase 5 (470 aa).

Glu47 and Tyr85 together coordinate substrate. Lys272 bears the N6-(pyridoxal phosphate)lysine mark. Ser461 is subject to Phosphoserine.

Belongs to the class-I pyridoxal-phosphate-dependent aminotransferase family. As to quaternary structure, homodimer and heterodimer. In vivo, the relevance of heterodimerization with other ACS enzymes is however unsure. Interacts (via its C-terminal region) with FEI1, FEI2, ETO1, EOL1 and EOL2. Interacts with GRF3. Requires pyridoxal 5'-phosphate as cofactor. May be processed at its C-terminus. Post-translationally, ubiquitinated. The interaction with ETO1 (and possibly EOL1 and EOL2) mediate its proteasome-dependent degradation. Its stability and degradation plays a central role in ethylene biosynthesis. As to expression, expressed in roots and siliques.

It catalyses the reaction S-adenosyl-L-methionine = 1-aminocyclopropane-1-carboxylate + S-methyl-5'-thioadenosine + H(+). It participates in alkene biosynthesis; ethylene biosynthesis via S-adenosyl-L-methionine; ethylene from S-adenosyl-L-methionine: step 1/2. Functionally, 1-aminocyclopropane-1-carboxylate synthase (ACS) enzymes catalyze the conversion of S-adenosyl-L-methionine (SAM) into 1-aminocyclopropane-1-carboxylate (ACC), a direct precursor of ethylene. The polypeptide is 1-aminocyclopropane-1-carboxylate synthase 5 (ACS5) (Arabidopsis thaliana (Mouse-ear cress)).